Consider the following 134-residue polypeptide: DHEIAAAAGVPIPTIFEMEGEQGFRSRETAILKKLIVLPHIVLSTGGGAVLKEENRALIRKSGTVVYLHAPPETLLERTRCDNSRPLLQVADPLAKLRELYAARDPVYRQTADFTVESANCRETVQTLLKRLSR.

The protein belongs to the shikimate kinase family.

It is found in the cytoplasm. It catalyses the reaction shikimate + ATP = 3-phosphoshikimate + ADP + H(+). The protein operates within metabolic intermediate biosynthesis; chorismate biosynthesis; chorismate from D-erythrose 4-phosphate and phosphoenolpyruvate: step 5/7. This chain is Shikimate kinase (aroK), found in Neisseria gonorrhoeae.